We begin with the raw amino-acid sequence, 304 residues long: Non-specific ribonucleoside hydrolase RihC (304 aa).

The active site involves His233.

It belongs to the IUNH family. RihC subfamily.

Its function is as follows. Hydrolyzes both purine and pyrimidine ribonucleosides with a broad-substrate specificity. The sequence is that of Non-specific ribonucleoside hydrolase RihC from Escherichia coli (strain SE11).